Reading from the N-terminus, the 387-residue chain is Pepsin II-2/3 (387 aa).

A signal peptide spans 1–15 (MKWLLLLGLLALSEC). Positions 16–59 (IVHKVPLVRKKSLRKNLIEKGLLQDYLKTHTPNPATKYFPKETF) are cleaved as a propeptide — activation peptide. In terms of domain architecture, Peptidase A1 spans 75–384 (YFGTISIGTP…DRANNQLGLA (310 aa)). Residue D93 is part of the active site. Cysteines 106 and 111 form a disulfide. A Phosphoserine modification is found at S129. C267 and C271 form a disulfide bridge. The active site involves D276. C310 and C343 are joined by a disulfide.

The protein belongs to the peptidase A1 family.

Its subcellular location is the secreted. It catalyses the reaction Preferential cleavage: hydrophobic, preferably aromatic, residues in P1 and P1' positions. Cleaves 1-Phe-|-Val-2, 4-Gln-|-His-5, 13-Glu-|-Ala-14, 14-Ala-|-Leu-15, 15-Leu-|-Tyr-16, 16-Tyr-|-Leu-17, 23-Gly-|-Phe-24, 24-Phe-|-Phe-25 and 25-Phe-|-Tyr-26 bonds in the B chain of insulin.. In terms of biological role, shows particularly broad specificity; although bonds involving phenylalanine and leucine are preferred, many others are also cleaved to some extent. The polypeptide is Pepsin II-2/3 (Oryctolagus cuniculus (Rabbit)).